Consider the following 708-residue polypeptide: Lactotransferrin (708 aa).

Residues 1–19 (MKLFVPALLSLGALGLCLA) form the signal peptide. Transferrin-like domains lie at 25 to 352 (VRWC…NLRE) and 364 to 693 (VVWC…NLKK). Cystine bridges form between C28/C64 and C38/C55. D79 contacts Fe(3+). The active site involves K92. Y111 is a Fe(3+) binding site. Intrachain disulfides connect C134–C217, C176–C192, C179–C202, C189–C200, and C250–C264. Positions 140, 142, and 143 each coordinate hydrogencarbonate. Y211 provides a ligand contact to Fe(3+). Residue N252 is glycosylated (N-linked (GlcNAc...) (high mannose) asparagine). H272 provides a ligand contact to Fe(3+). S278 serves as the catalytic Nucleophile. N300 carries an N-linked (GlcNAc...) asparagine glycan. Disulfide bonds link C367/C399 and C377/C390. Residue N387 is glycosylated (N-linked (GlcNAc...) (complex) asparagine; alternate). N-linked (GlcNAc...) (high mannose) asparagine; alternate glycosylation occurs at N387. A glycan (N-linked (GlcNAc...) (hybrid) asparagine; alternate) is linked at N387. Positions 414 and 452 each coordinate Fe(3+). Disulfide bonds link C424/C703, C444/C666, C476/C551, C500/C694, C510/C524, C521/C534, C592/C606, and C644/C649. Positions 478, 482, 484, and 485 each coordinate hydrogencarbonate. The N-linked (GlcNAc...) (complex) asparagine; alternate glycan is linked to N495. N495 is a glycosylation site (N-linked (GlcNAc...) (high mannose) asparagine; alternate). The N-linked (GlcNAc...) (hybrid) asparagine; alternate glycan is linked to N495. Y545 provides a ligand contact to Fe(3+). N564 carries N-linked (GlcNAc...) (high mannose) asparagine glycosylation. H614 provides a ligand contact to Fe(3+).

This sequence belongs to the transferrin family. In terms of assembly, monomer. Found in a complex with LTF, CLU, EPPIN and SEMG1. Found in a complex with MPO and LTF; interacts directly with CP, allows Fe(3+) incorporation into LTF and activation of CP ferroxidase activity. In terms of processing, poly-N-acetyllactosaminic carbohydrate moiety seems to be needed for TLR4 activation.

The protein resides in the secreted. The protein localises to the cytoplasmic granule. Functionally, transferrins are iron binding transport proteins which can bind two Fe(3+) ions in association with the binding of an anion, usually bicarbonate. Major iron-binding and multifunctional protein found in exocrine fluids such as breast milk and mucosal secretions. Has antimicrobial activity, which depends on the extracellular cation concentration. Antimicrobial properties include bacteriostasis, which is related to its ability to sequester free iron and thus inhibit microbial growth, as well as direct bactericidal properties leading to the release of lipopolysaccharides from the bacterial outer membrane. Can also prevent bacterial biofilm development in P.aeruginosa infection. Has weak antifungal activity against C.albicans. Has anabolic, differentiating and anti-apoptotic effects on osteoblasts and can also inhibit osteoclastogenesis, possibly playing a role in the regulation of bone growth. Promotes binding of species C adenoviruses to epithelial cells, promoting adenovirus infection. Can inhibit papillomavirus infections. Stimulates the TLR4 signaling pathway leading to NF-kappa-B activation and subsequent pro-inflammatory cytokine production while also interfering with the lipopolysaccharide (LPS)-stimulated TLR4 signaling. Inhibits neutrophil granulocyte migration to sites of apoptosis, when secreted by apoptotic cells. Stimulates VEGFA-mediated endothelial cell migration and proliferation. Binds heparin, chondroitin sulfate and possibly other glycosaminoglycans (GAGs). Also binds specifically to pneumococcal surface protein A (PspA), the lipid A portion of bacterial lipopolysaccharide (LPS), lysozyme and DNA. In terms of biological role, lactoferricin binds to the bacterial surface and is crucial for the bactericidal functions. Has some antiviral activity against papillomavirus infection. N-terminal region shows strong antifungal activity against C.albicans. Contains two BBXB heparin-binding consensus sequences that appear to form the predominate functional GAG-binding site. Its function is as follows. The lactotransferrin transferrin-like domain 1 functions as a serine protease of the peptidase S60 family that cuts arginine rich regions. This function contributes to the antimicrobial activity. Shows a preferential cleavage at -Arg-Ser-Arg-Arg-|- and -Arg-Arg-Ser-Arg-|-, and of Z-Phe-Arg-|-aminomethylcoumarin sites. The chain is Lactotransferrin (LTF) from Capra hircus (Goat).